Reading from the N-terminus, the 448-residue chain is Tryptophan dimethylallyltransferase 2 (448 aa).

L-tryptophan contacts are provided by residues Ile80 to Leu81 and Glu89. 3 residues coordinate substrate: Arg100, Lys186, and Tyr188. L-tryptophan is bound by residues Tyr190 and Arg249. Substrate-binding residues include Arg262, Lys264, Tyr266, Gln348, Tyr350, Tyr414, and Tyr418.

The protein belongs to the tryptophan dimethylallyltransferase family. Homodimer.

The enzyme catalyses L-tryptophan + dimethylallyl diphosphate = 4-(3-methylbut-2-enyl)-L-tryptophan + diphosphate. It functions in the pathway alkaloid biosynthesis; ergot alkaloid biosynthesis. Functionally, catalyzes the first step of ergot alkaloid biosynthesis. Ergot alkaloids, which are produced by endophyte fungi, can enhance plant host fitness, but also cause livestock toxicosis to host plants. This Claviceps purpurea (strain 20.1) (Ergot fungus) protein is Tryptophan dimethylallyltransferase 2 (dmaW2).